Consider the following 466-residue polypeptide: 3-isopropylmalate dehydratase large subunit (466 aa).

Cysteine 346, cysteine 406, and cysteine 409 together coordinate [4Fe-4S] cluster.

It belongs to the aconitase/IPM isomerase family. LeuC type 1 subfamily. Heterodimer of LeuC and LeuD. Requires [4Fe-4S] cluster as cofactor.

It catalyses the reaction (2R,3S)-3-isopropylmalate = (2S)-2-isopropylmalate. Its pathway is amino-acid biosynthesis; L-leucine biosynthesis; L-leucine from 3-methyl-2-oxobutanoate: step 2/4. Catalyzes the isomerization between 2-isopropylmalate and 3-isopropylmalate, via the formation of 2-isopropylmaleate. The polypeptide is 3-isopropylmalate dehydratase large subunit (Cytophaga hutchinsonii (strain ATCC 33406 / DSM 1761 / CIP 103989 / NBRC 15051 / NCIMB 9469 / D465)).